Reading from the N-terminus, the 340-residue chain is Ketol-acid reductoisomerase (NADP(+)) (340 aa).

The KARI N-terminal Rossmann domain occupies 3 to 182 (VQMEYEKDVK…GAARVGLLET (180 aa)). NADP(+)-binding positions include 26 to 29 (YGSQ), arginine 49, serine 53, and 83 to 86 (DEIQ). The active site involves histidine 108. Residue glycine 134 coordinates NADP(+). Positions 183–328 (TYKEETEEDL…AELRKAMPFV (146 aa)) constitute a KARI C-terminal knotted domain. Mg(2+) is bound by residues aspartate 191, glutamate 195, glutamate 227, and glutamate 231. Substrate is bound at residue serine 252.

Belongs to the ketol-acid reductoisomerase family. Mg(2+) is required as a cofactor.

The enzyme catalyses (2R)-2,3-dihydroxy-3-methylbutanoate + NADP(+) = (2S)-2-acetolactate + NADPH + H(+). The catalysed reaction is (2R,3R)-2,3-dihydroxy-3-methylpentanoate + NADP(+) = (S)-2-ethyl-2-hydroxy-3-oxobutanoate + NADPH + H(+). The protein operates within amino-acid biosynthesis; L-isoleucine biosynthesis; L-isoleucine from 2-oxobutanoate: step 2/4. It functions in the pathway amino-acid biosynthesis; L-valine biosynthesis; L-valine from pyruvate: step 2/4. Its function is as follows. Involved in the biosynthesis of branched-chain amino acids (BCAA). Catalyzes an alkyl-migration followed by a ketol-acid reduction of (S)-2-acetolactate (S2AL) to yield (R)-2,3-dihydroxy-isovalerate. In the isomerase reaction, S2AL is rearranged via a Mg-dependent methyl migration to produce 3-hydroxy-3-methyl-2-ketobutyrate (HMKB). In the reductase reaction, this 2-ketoacid undergoes a metal-dependent reduction by NADPH to yield (R)-2,3-dihydroxy-isovalerate. The polypeptide is Ketol-acid reductoisomerase (NADP(+)) (Streptococcus gordonii (strain Challis / ATCC 35105 / BCRC 15272 / CH1 / DL1 / V288)).